A 476-amino-acid chain; its full sequence is Adenosylhomocysteinase (476 aa).

Substrate-binding residues include Thr-61, Asp-140, and Glu-200. 201–203 (TTT) is an NAD(+) binding site. Lys-230 and Asp-234 together coordinate substrate. NAD(+) contacts are provided by residues Asn-235, 264-269 (GYGDVG), Glu-287, Asn-322, 343-345 (IGH), and Asn-389.

Belongs to the adenosylhomocysteinase family. NAD(+) serves as cofactor.

The protein localises to the cytoplasm. It catalyses the reaction S-adenosyl-L-homocysteine + H2O = L-homocysteine + adenosine. Its pathway is amino-acid biosynthesis; L-homocysteine biosynthesis; L-homocysteine from S-adenosyl-L-homocysteine: step 1/1. Functionally, may play a key role in the regulation of the intracellular concentration of adenosylhomocysteine. This is Adenosylhomocysteinase from Acidovorax sp. (strain JS42).